We begin with the raw amino-acid sequence, 492 residues long: Glutamyl-tRNA(Gln) amidotransferase subunit A (492 aa).

Active-site charge relay system residues include lysine 78 and serine 158. Catalysis depends on serine 182, which acts as the Acyl-ester intermediate.

Belongs to the amidase family. GatA subfamily. In terms of assembly, heterotrimer of A, B and C subunits.

The enzyme catalyses L-glutamyl-tRNA(Gln) + L-glutamine + ATP + H2O = L-glutaminyl-tRNA(Gln) + L-glutamate + ADP + phosphate + H(+). Allows the formation of correctly charged Gln-tRNA(Gln) through the transamidation of misacylated Glu-tRNA(Gln) in organisms which lack glutaminyl-tRNA synthetase. The reaction takes place in the presence of glutamine and ATP through an activated gamma-phospho-Glu-tRNA(Gln). The chain is Glutamyl-tRNA(Gln) amidotransferase subunit A from Rhodopseudomonas palustris (strain ATCC BAA-98 / CGA009).